Here is a 119-residue protein sequence, read N- to C-terminus: Large ribosomal subunit protein uL18 (119 aa).

Belongs to the universal ribosomal protein uL18 family. Part of the 50S ribosomal subunit; part of the 5S rRNA/L5/L18/L25 subcomplex. Contacts the 5S and 23S rRNAs.

In terms of biological role, this is one of the proteins that bind and probably mediate the attachment of the 5S RNA into the large ribosomal subunit, where it forms part of the central protuberance. The polypeptide is Large ribosomal subunit protein uL18 (Clostridium botulinum (strain Langeland / NCTC 10281 / Type F)).